The chain runs to 90 residues: MARTVNCVKLKREAEGLDYPPYPGELGARIWREISKESWEEWKQIQTRLVNENRLNLADARARKYLQQQMERFLFEDGTVEAQGYVPPSA.

The protein belongs to the Fe(2+)-trafficking protein family.

Functionally, could be a mediator in iron transactions between iron acquisition and iron-requiring processes, such as synthesis and/or repair of Fe-S clusters in biosynthetic enzymes. In Bordetella avium (strain 197N), this protein is Probable Fe(2+)-trafficking protein.